The sequence spans 452 residues: UDP-N-acetylmuramoylalanine--D-glutamate ligase (452 aa).

An ATP-binding site is contributed by 113–119 (GTNGKTT).

The protein belongs to the MurCDEF family.

Its subcellular location is the cytoplasm. The enzyme catalyses UDP-N-acetyl-alpha-D-muramoyl-L-alanine + D-glutamate + ATP = UDP-N-acetyl-alpha-D-muramoyl-L-alanyl-D-glutamate + ADP + phosphate + H(+). It functions in the pathway cell wall biogenesis; peptidoglycan biosynthesis. Cell wall formation. Catalyzes the addition of glutamate to the nucleotide precursor UDP-N-acetylmuramoyl-L-alanine (UMA). The chain is UDP-N-acetylmuramoylalanine--D-glutamate ligase (murD) from Synechocystis sp. (strain ATCC 27184 / PCC 6803 / Kazusa).